The sequence spans 267 residues: Undecaprenyl-diphosphatase (267 aa).

8 helical membrane passes run 1-21, 39-59, 87-107, 113-133, 144-164, 189-209, 219-239, and 244-264; these read MSEL…FLPI, QGLA…LIYF, WWIL…KSLV, SGYV…WADA, TGLK…IPGT, FLMS…KFIL, LFLG…VFLI, and VGMM…FYIL.

It belongs to the UppP family.

It localises to the cell inner membrane. The catalysed reaction is di-trans,octa-cis-undecaprenyl diphosphate + H2O = di-trans,octa-cis-undecaprenyl phosphate + phosphate + H(+). Functionally, catalyzes the dephosphorylation of undecaprenyl diphosphate (UPP). Confers resistance to bacitracin. The sequence is that of Undecaprenyl-diphosphatase from Psychromonas ingrahamii (strain DSM 17664 / CCUG 51855 / 37).